The chain runs to 439 residues: Sodium-dependent phosphate transport protein 3 (439 aa).

Residues asparagine 47, asparagine 56, asparagine 68, and asparagine 69 are each glycosylated (N-linked (GlcNAc...) asparagine). The next 9 membrane-spanning stretches (helical) occupy residues 98–118 (INYG…IFGA), 130–150 (SLLT…VIMV), 183–203 (TIAG…GGLI), 211–231 (FIFY…FTVI), 273–293 (LPLW…TIIL), 317–337 (LPFI…DFLL), 350–369 (LFSS…LPFV), 374–396 (VITI…GFII), and 415–435 (GFGL…ISQV).

It belongs to the major facilitator superfamily. Sodium/anion cotransporter family. Expressed in the small intestine, kidney, spleen and testis. Not detected in fetal brain, bone marrow, and mammary gland.

It is found in the apical cell membrane. The enzyme catalyses 3 Na(+)(out) + phosphate(out) = 3 Na(+)(in) + phosphate(in). The catalysed reaction is urate(out) + n chloride(in) = urate(in) + n chloride(out). Functionally, acts as a membrane potential-dependent organic anion transporter, the transport requires a low concentration of chloride ions. Mediates chloride-dependent transport of urate. Can actively transport inorganic phosphate into cells via Na(+) cotransport. The chain is Sodium-dependent phosphate transport protein 3 (SLC17A2) from Homo sapiens (Human).